A 248-amino-acid polypeptide reads, in one-letter code: 14-3-3 protein sigma (248 aa).

Phosphoserine is present on residues Ser5, Ser74, and Ser248.

Belongs to the 14-3-3 family. As to quaternary structure, homodimer. Interacts with KRT17 and SAMSN1. Found in a complex with XPO7, EIF4A1, ARHGAP1, VPS26A, VPS29 and VPS35. Interacts with GAB2. Interacts with SRPK2. Interacts with COPS6. Interacts with COP1; this interaction leads to proteasomal degradation. Interacts with the 'Thr-369' phosphorylated form of DAPK2. Interacts with PI4KB. Interacts with SLITRK1. Interacts with LRRK2; this interaction is dependent on LRRK2 phosphorylation. Interacts with PKP3 (via N-terminus); the interaction maintains the cytoplasmic pool of PKP3, facilitates PKP3 exchange at desmosomes and restricts PKP3 localization to existing desmosome cell junctions. Interacts with LCP2. Post-translationally, ubiquitinated. Ubiquitination by RFFL induces proteasomal degradation and indirectly regulates p53/TP53 activation.

It is found in the cytoplasm. It localises to the nucleus. Its subcellular location is the secreted. Its function is as follows. Adapter protein implicated in the regulation of a large spectrum of both general and specialized signaling pathways. Binds to a large number of partners, usually by recognition of a phosphoserine or phosphothreonine motif. Binding generally results in the modulation of the activity of the binding partner. Promotes cytosolic retention of GBP1 GTPase by binding to phosphorylated GBP1, thereby inhibiting the innate immune response. Also acts as a TP53/p53-regulated inhibitor of G2/M progression. When bound to KRT17, regulates protein synthesis and epithelial cell growth by stimulating Akt/mTOR pathway. Acts to maintain desmosome cell junction adhesion in epithelial cells via interacting with and sequestering PKP3 to the cytoplasm, thereby restricting its translocation to existing desmosome structures and therefore maintaining desmosome protein homeostasis. Also acts to facilitate PKP3 exchange at desmosome plaques, thereby maintaining keratinocyte intercellular adhesion. May also regulate MDM2 autoubiquitination and degradation and thereby activate p53/TP53. The sequence is that of 14-3-3 protein sigma (SFN) from Bos taurus (Bovine).